We begin with the raw amino-acid sequence, 386 residues long: Probable magnesium transporter NIPA5 (386 aa).

Residues 1–18 (MVYSSGSWRDAYKGMSSD) lie on the Extracellular side of the membrane. Residues 19–39 (NVKGLVLALSSSIFIGASFIV) traverse the membrane as a helical segment. Over 40–61 (KKKGLKKAGASGLRAGSGGYSY) the chain is Cytoplasmic. The next 2 helical transmembrane spans lie at 62-82 (LLEPLWWIGMITMIVGEIANF) and 83-103 (AAYAFAPAILVTPLGALSIII). At 104–115 (SASLAHIILQEK) the chain is on the cytoplasmic side. Residues 116–136 (LHTFGILGCALCIVGSVTIVL) form a helical membrane-spanning segment. Topologically, residues 137–157 (HAPQEQDIVSVLEVWNLATEP) are extracellular. A helical transmembrane segment spans residues 158-178 (AFLFYAAAVVGAAIVLIVQFI). Residues 179–189 (PLYGQSHVMVY) lie on the Cytoplasmic side of the membrane. The chain crosses the membrane as a helical span at residues 190 to 210 (IGVCSLIGSLSVMSVKALGIA). The Extracellular segment spans residues 211 to 220 (LKLTFSGTNQ). Residues 221 to 241 (LGYPQTWVFTVIVLFCVITQM) traverse the membrane as a helical segment. Topologically, residues 242 to 255 (NYLNKALDTFNTAV) are cytoplasmic. The helical transmembrane segment at 256–276 (VSPIYYVMFTSLTILASVIMF) threads the bilayer. Topologically, residues 277–283 (KDWDRQS) are extracellular. Residues 284–304 (GTQIMTELCGFVTILSGTFLL) form a helical membrane-spanning segment. Topologically, residues 305 to 386 (HTTTDMVDGE…LRRQESSLRS (82 aa)) are cytoplasmic. The disordered stretch occupies residues 352–386 (RQESAKSPRPARQNKQLEDDLEAVPLRRQESSLRS). A compositionally biased stretch (basic and acidic residues) spans 376–386 (PLRRQESSLRS).

The protein belongs to the NIPA (TC 2.A.7) family. As to quaternary structure, homodimer.

The protein localises to the cell membrane. It localises to the early endosome. In terms of biological role, acts as a Mg(2+) transporter. Can also transport other divalent cations such as Fe(2+), Sr(2+), Ba(2+), Mn(2+) and Co(2+) but to a much less extent than Mg(2+). In Arabidopsis thaliana (Mouse-ear cress), this protein is Probable magnesium transporter NIPA5.